A 526-amino-acid chain; its full sequence is Thymocyte selection-associated high mobility group box protein TOX (526 aa).

Positions 194-203 are enriched in polar residues; sequence NMGGTNVAHN. The tract at residues 194-264 is disordered; it reads NMGGTNVAHN…KKDPNEPQKP (71 aa). The segment covering 209-220 has biased composition (low complexity); it reads GSKSATPSPSSS. Positions 228-245 are enriched in basic and acidic residues; the sequence is DASKINGGEKRPASDMGK. The short motif at 237-256 is the Nuclear localization signal element; it reads KRPASDMGKKPKTPKKKKKK. Basic residues predominate over residues 246-256; the sequence is KPKTPKKKKKK. The HMG box DNA-binding region spans 261-329; the sequence is PQKPVSAYAL…EYLKQLAAYR (69 aa).

This sequence belongs to the high motility group (HMG) box superfamily. In terms of assembly, interacts with HBO1 complex composed at least of KAT7/HBO1, ING4, MEAF6, and JADE2; this complex is involved in histone acetylation. Interacts with DNMT1, LEO1, PAF1, SAP130 and SIN3A; these interactors regulate chromatin remodeling. Interacts with an array of proteins involved in RNA processing and translation and DNA replication. Expressed in neurons of the subventricular zone (at protein level). Expressed in distinct subpopulations of thymocytes undergoing positive selection: double CD4-positive CD8-positive (DP) cells, CD4-positive CD8-low transitional cells and in single CD4-positive and CD8-positive cells (at protein level). Expressed in ILC progenitors and mature ILC subsets: ILC1, ILC2 and ILC3 (at protein level). Expressed in lymphoid tissue-inducer cells and bone marrow NK cell subsets. Abundant in thymus, liver and brain. Also detected in small intestine, spleen, stomach and testis. Highly expressed in tumor-infiltrating CD8-positive T cells (at protein level).

Its subcellular location is the nucleus. Its function is as follows. Transcriptional regulator with a major role in neural stem cell commitment and corticogenesis as well as in lymphoid cell development and lymphoid tissue organogenesis. Binds to GC-rich DNA sequences in the proximity of transcription start sites and may alter chromatin structure, modifying access of transcription factors to DNA. During cortical development, controls the neural stem cell pool by inhibiting the switch from proliferative to differentiating progenitors. Beyond progenitor cells, promotes neurite outgrowth in newborn neurons migrating to reach the cortical plate. May activate or repress critical genes for neural stem cell fate such as SOX2, EOMES and ROBO2. Plays an essential role in the development of lymphoid tissue-inducer (LTi) cells, a subset necessary for the formation of secondary lymphoid organs: peripheral lymph nodes and Peyer's patches. Acts as a developmental checkpoint and regulates thymocyte positive selection toward T cell lineage commitment. Required for the development of various T cell subsets, including CD4-positive helper T cells, CD8-positive cytotoxic T cells, regulatory T cells and CD1D-dependent natural killer T (NKT) cells. Required for the differentiation of common lymphoid progenitors (CMP) to innate lymphoid cells (ILC). May regulate the NOTCH-mediated gene program, promoting differentiation of the ILC lineage. Required at the progenitor phase of NK cell development in the bone marrow to specify NK cell lineage commitment. Upon chronic antigen stimulation, diverts T cell development by promoting the generation of exhaustive T cells, while suppressing effector and memory T cell programming. May regulate the expression of genes encoding inhibitory receptors such as PDCD1 and induce the exhaustion program, to prevent the overstimulation of T cells and activation-induced cell death. The sequence is that of Thymocyte selection-associated high mobility group box protein TOX from Mus musculus (Mouse).